A 473-amino-acid chain; its full sequence is Photosystem II CP43 reaction center protein (473 aa).

Residues 1–14 constitute a propeptide that is removed on maturation; it reads MKILYSLRRFYHVE. The residue at position 15 (Thr-15) is an N-acetylthreonine. Thr-15 carries the post-translational modification Phosphothreonine. 5 helical membrane-spanning segments follow: residues 69–93, 134–155, 178–200, 255–275, and 291–312; these read LFEVAHFVPEKPMYEQGLILLPHLA, LLGPETLEESFPFFGYVWKDRN, KALYFGGVYDTWAPGGGDVRKIT, KPFAWARRAFVWSGEAYLSYS, and WFNNTAYPSEFYGPTGPEASQA. Residue Glu-367 coordinates [CaMn4O5] cluster. A helical transmembrane segment spans residues 447–471; that stretch reads RARAAAAGFEKGIDRDLEPVLYMNP.

The protein belongs to the PsbB/PsbC family. PsbC subfamily. PSII is composed of 1 copy each of membrane proteins PsbA, PsbB, PsbC, PsbD, PsbE, PsbF, PsbH, PsbI, PsbJ, PsbK, PsbL, PsbM, PsbT, PsbX, PsbY, PsbZ, Psb30/Ycf12, at least 3 peripheral proteins of the oxygen-evolving complex and a large number of cofactors. It forms dimeric complexes. Binds multiple chlorophylls and provides some of the ligands for the Ca-4Mn-5O cluster of the oxygen-evolving complex. It may also provide a ligand for a Cl- that is required for oxygen evolution. PSII binds additional chlorophylls, carotenoids and specific lipids. serves as cofactor.

It localises to the plastid. Its subcellular location is the chloroplast thylakoid membrane. Its function is as follows. One of the components of the core complex of photosystem II (PSII). It binds chlorophyll and helps catalyze the primary light-induced photochemical processes of PSII. PSII is a light-driven water:plastoquinone oxidoreductase, using light energy to abstract electrons from H(2)O, generating O(2) and a proton gradient subsequently used for ATP formation. The chain is Photosystem II CP43 reaction center protein from Lolium perenne (Perennial ryegrass).